A 157-amino-acid polypeptide reads, in one-letter code: Protein Smg (157 aa).

This sequence belongs to the Smg family.

This chain is Protein Smg, found in Klebsiella pneumoniae (strain 342).